Here is an 840-residue protein sequence, read N- to C-terminus: Phosphatidylinositol-3-phosphatase myotubularin-1 (840 aa).

Residues 1–28 form a disordered region; the sequence is MTPPRPPSGRVRSLRDYSSESEKMDGTG. Residues 13–25 are compositionally biased toward basic and acidic residues; sequence SLRDYSSESEKMD. The GRAM domain occupies 45–112; that stretch reads GSFSNLSCLL…ATIEKFNKMV (68 aa). One can recognise a Myotubularin phosphatase domain in the interval 199–650; sequence GKSSIRASMD…LAPTLWPQFH (452 aa). Residues 332-335, 357-358, 443-449, and R489 each bind substrate; these read NGAM, NI, and CSDGWDR. C443 serves as the catalytic Phosphocysteine intermediate. The segment at 506–535 is disordered; that stretch reads QSSSAGSFPSSPVRQSSGSAASQSSSSSHG. Positions 507–535 are enriched in low complexity; it reads SSSAGSFPSSPVRQSSGSAASQSSSSSHG. Residues 666–734 adopt a coiled-coil conformation; it reads VQCRAMTVKY…AALTRAVQSL (69 aa). A disordered region spans residues 745 to 771; it reads VEDDPRSSLENNPRRRNRHGNNSDVSV.

It belongs to the protein-tyrosine phosphatase family. Non-receptor class myotubularin subfamily. In terms of tissue distribution, mostly expressed in siliques and leaves (including hydathodes), and, to a lower extent, in flowers and roots.

Its subcellular location is the cytoplasm. The protein resides in the endosome membrane. The enzyme catalyses a 1,2-diacyl-sn-glycero-3-phospho-(1D-myo-inositol-3-phosphate) + H2O = a 1,2-diacyl-sn-glycero-3-phospho-(1D-myo-inositol) + phosphate. It carries out the reaction a 1,2-diacyl-sn-glycero-3-phospho-(1D-myo-inositol-3,5-bisphosphate) + H2O = a 1,2-diacyl-sn-glycero-3-phospho-(1D-myo-inositol-5-phosphate) + phosphate. In terms of biological role, phosphatase with phosphoinositide 3'-phosphatase activity that can use phosphatidylinositol-3-phosphate (PtdIns3P) and phosphatidylinositol-3,5-diphosphate (PtdIns3,5P(2)) as substrates and produces phosphatidylinositol-5-phosphate (PtdIns5P); participates in pathway(s) that transfer gene regulatory signals to the nucleus. Required for recovery after water deprivation, via the accumulation of PtdIns5P upon dehydration; high PtdIns5P levels mediate ATX1 cytoplasmic localization, thus down-regulating the expression of ATX1-dependent genes. Confers sensitivity to soil-water-deficit stress. The sequence is that of Phosphatidylinositol-3-phosphatase myotubularin-1 (MTM1) from Arabidopsis thaliana (Mouse-ear cress).